The sequence spans 235 residues: Type III pantothenate kinase (235 aa).

6-13 serves as a coordination point for ATP; the sequence is DVGNTSLK. Residues Tyr79 and 86-89 contribute to the substrate site; that span reads GIDR. The active-site Proton acceptor is the Asp88. Asp109 contributes to the K(+) binding site. Residue Thr112 participates in ATP binding. Substrate is bound at residue Thr164.

This sequence belongs to the type III pantothenate kinase family. In terms of assembly, homodimer. It depends on NH4(+) as a cofactor. Requires K(+) as cofactor.

Its subcellular location is the cytoplasm. It carries out the reaction (R)-pantothenate + ATP = (R)-4'-phosphopantothenate + ADP + H(+). It functions in the pathway cofactor biosynthesis; coenzyme A biosynthesis; CoA from (R)-pantothenate: step 1/5. Functionally, catalyzes the phosphorylation of pantothenate (Pan), the first step in CoA biosynthesis. This is Type III pantothenate kinase from Pseudoalteromonas translucida (strain TAC 125).